The following is a 325-amino-acid chain: Diacylglycerol acyltransferase/mycolyltransferase Ag85B (325 aa).

The signal sequence occupies residues 1-40; that stretch reads MTDVSGKIRAWGRRLLVGAAAAAALPGLVGLAGGAATAGA. 82 to 83 serves as a coordination point for substrate; sequence LR. Residues 98-108 are fibronectin-binding; the sequence is FEWYYQSGLSV. Cysteine 127 and cysteine 132 are joined by a disulfide. Residues serine 166 and aspartate 194 each contribute to the substrate site. Residue serine 166 is the Nucleophile of the active site. Glutamate 270 is an active-site residue. Substrate contacts are provided by residues 272-275, lysine 279, and 302-304; these read FVRS and HSW. The active site involves histidine 302.

It belongs to the mycobacterial A85 antigen family.

The protein resides in the secreted. It carries out the reaction 2 alpha,alpha'-trehalose 6-mycolate = alpha,alpha'-trehalose 6,6'-bismycolate + alpha,alpha-trehalose. It catalyses the reaction an acyl-CoA + a 1,2-diacyl-sn-glycerol = a triacyl-sn-glycerol + CoA. In terms of biological role, the antigen 85 proteins (FbpA, FbpB, FbpC) are responsible for the high affinity of mycobacteria for fibronectin, a large adhesive glycoprotein, which facilitates the attachment of M.tuberculosis to murine alveolar macrophages (AMs). They also help to maintain the integrity of the cell wall by catalyzing the transfer of mycolic acids to cell wall arabinogalactan and through the synthesis of alpha,alpha-trehalose dimycolate (TDM, cord factor). They catalyze the transfer of a mycoloyl residue from one molecule of alpha,alpha-trehalose monomycolate (TMM) to another TMM, leading to the formation of TDM. The chain is Diacylglycerol acyltransferase/mycolyltransferase Ag85B (fbpB) from Mycobacterium kansasii.